Consider the following 119-residue polypeptide: MHILDSVDAASLRTDVPAFRAGDTLKVHVNIIEGKNSRVQVFQGFVLGRQGDGVRETFTVRKVSFGVGVERTFPVHSPIIDKIEVVTKGDVRRAKLYYMRALRGKAAKIKEKRDFTSAK.

It belongs to the bacterial ribosomal protein bL19 family.

Functionally, this protein is located at the 30S-50S ribosomal subunit interface and may play a role in the structure and function of the aminoacyl-tRNA binding site. The chain is Large ribosomal subunit protein bL19 from Pseudarthrobacter chlorophenolicus (strain ATCC 700700 / DSM 12829 / CIP 107037 / JCM 12360 / KCTC 9906 / NCIMB 13794 / A6) (Arthrobacter chlorophenolicus).